We begin with the raw amino-acid sequence, 174 residues long: Superoxide dismutase [Cu-Zn] (174 aa).

Positions 1 to 20 (MMKSLFIASTMVLMAFPAFA) are cleaved as a signal peptide. Cu cation contacts are provided by H68, H70, and H93. The cysteines at positions 75 and 170 are disulfide-linked. Zn(2+)-binding residues include H93, H102, H110, and D113. H148 is a binding site for Cu cation.

This sequence belongs to the Cu-Zn superoxide dismutase family. Homodimer. Requires Cu cation as cofactor. The cofactor is Zn(2+).

The protein resides in the periplasm. The catalysed reaction is 2 superoxide + 2 H(+) = H2O2 + O2. Its function is as follows. Destroys radicals which are normally produced within the cells and which are toxic to biological systems. This is Superoxide dismutase [Cu-Zn] (sodC) from Brucella melitensis biotype 1 (strain ATCC 23456 / CCUG 17765 / NCTC 10094 / 16M).